The sequence spans 497 residues: Glycerol kinase (497 aa).

Threonine 12 is a binding site for ADP. ATP-binding residues include threonine 12, threonine 13, and serine 14. Threonine 12 contacts sn-glycerol 3-phosphate. Arginine 16 contributes to the ADP binding site. Residues arginine 82, glutamate 83, tyrosine 134, and aspartate 243 each contribute to the sn-glycerol 3-phosphate site. Residues arginine 82, glutamate 83, tyrosine 134, aspartate 243, and glutamine 244 each coordinate glycerol. The ADP site is built by threonine 265 and glycine 308. ATP contacts are provided by threonine 265, glycine 308, glutamine 312, and glycine 409. Residues glycine 409 and asparagine 413 each coordinate ADP.

It belongs to the FGGY kinase family. Homotetramer and homodimer (in equilibrium).

The enzyme catalyses glycerol + ATP = sn-glycerol 3-phosphate + ADP + H(+). The protein operates within polyol metabolism; glycerol degradation via glycerol kinase pathway; sn-glycerol 3-phosphate from glycerol: step 1/1. Activated by phosphorylation and inhibited by fructose 1,6-bisphosphate (FBP). Functionally, key enzyme in the regulation of glycerol uptake and metabolism. Catalyzes the phosphorylation of glycerol to yield sn-glycerol 3-phosphate. The polypeptide is Glycerol kinase (Thermoanaerobacter pseudethanolicus (strain ATCC 33223 / 39E) (Clostridium thermohydrosulfuricum)).